A 449-amino-acid polypeptide reads, in one-letter code: Gamma-glutamyl phosphate reductase (449 aa).

The protein belongs to the gamma-glutamyl phosphate reductase family.

Its subcellular location is the cytoplasm. The catalysed reaction is L-glutamate 5-semialdehyde + phosphate + NADP(+) = L-glutamyl 5-phosphate + NADPH + H(+). The protein operates within amino-acid biosynthesis; L-proline biosynthesis; L-glutamate 5-semialdehyde from L-glutamate: step 2/2. Catalyzes the NADPH-dependent reduction of L-glutamate 5-phosphate into L-glutamate 5-semialdehyde and phosphate. The product spontaneously undergoes cyclization to form 1-pyrroline-5-carboxylate. This Methanococcoides burtonii (strain DSM 6242 / NBRC 107633 / OCM 468 / ACE-M) protein is Gamma-glutamyl phosphate reductase.